A 93-amino-acid polypeptide reads, in one-letter code: Small ribosomal subunit protein uS19c (93 aa).

This sequence belongs to the universal ribosomal protein uS19 family.

It is found in the plastid. It localises to the chloroplast. Its function is as follows. Protein S19 forms a complex with S13 that binds strongly to the 16S ribosomal RNA. In Tetradesmus obliquus (Green alga), this protein is Small ribosomal subunit protein uS19c.